The chain runs to 200 residues: ATP synthase subunit s, mitochondrial (200 aa).

The transit peptide at 1-25 directs the protein to the mitochondrion; sequence MMLFGKISQQLCGVKKLPWSCDSRY. The tract at residues 1–61 is N-terminal domain; that stretch reads MMLFGKISQQ…SEWLLRCGAM (61 aa). Residue Gly-59 coordinates Mg(2+). 4 LRR repeats span residues 62 to 87, 88 to 116, 117 to 141, and 142 to 173; these read VRYHGQERWQKDYNHLPTGPLDKYKI, QAIDATDSCIMSIGFDHMEGLEHVEKIRL, CKCHYIEDDCLLRLSQLENLQKTIL, and EMEIISCGNITDKGIIALLHLRNLKYLLLSDL. Thr-93 is a Mg(2+) binding site.

This sequence belongs to the ATP synthase subunit s family. In terms of assembly, homotetramer. Associates with ATP synthase.

It localises to the mitochondrion. The protein localises to the mitochondrion inner membrane. In terms of biological role, involved in regulation of mitochondrial membrane ATP synthase. Necessary for H(+) conduction of ATP synthase. Facilitates energy-driven catalysis of ATP synthesis by blocking a proton leak through an alternative proton exit pathway. This chain is ATP synthase subunit s, mitochondrial (DMAC2L), found in Pongo abelii (Sumatran orangutan).